The chain runs to 365 residues: MSSSFGKIFRVSTFGESHGGGVGVILDGCPPKLKIDIKLIQNELDRRRPGQSDITTPRNEDDKIEILSGIKEGLTLGTPIAMLVRNKDQRPGDYNNLEQVFRPSHADGTYHLKYGIQAGSGGGRASARETIGRVAAGAVAKQLLKNLCNTEILSWVKRIHDIDSDVNKEKISLNKIDSNIVRCPDEKVSAEMIDRIKDLKRQGDSCGGVIECLVRNVPSGLGMPVFDKLEADLAKALMSLPATKGFEIGSGFSGTYLKGSEHNDSFIKSDDISKLRTTSNNSGGIQGGISNGENIEMKIAFKPTATIGKEQKTVNAEGKEVLMKAKGRHDPCVLPRAVPMVDAMVALVLADHLLLNNAQCGLMKN.

Arg47 is an NADP(+) binding site. Residues 124 to 126 (RAS), Gly287, 302 to 306 (KPTAT), and Arg328 each bind FMN.

This sequence belongs to the chorismate synthase family. In terms of assembly, homotetramer. It depends on FMNH2 as a cofactor.

It catalyses the reaction 5-O-(1-carboxyvinyl)-3-phosphoshikimate = chorismate + phosphate. Its pathway is metabolic intermediate biosynthesis; chorismate biosynthesis; chorismate from D-erythrose 4-phosphate and phosphoenolpyruvate: step 7/7. Catalyzes the anti-1,4-elimination of the C-3 phosphate and the C-6 proR hydrogen from 5-enolpyruvylshikimate-3-phosphate (EPSP) to yield chorismate, which is the branch point compound that serves as the starting substrate for the three terminal pathways of aromatic amino acid biosynthesis. This reaction introduces a second double bond into the aromatic ring system. This Prochlorococcus marinus (strain MIT 9312) protein is Chorismate synthase.